We begin with the raw amino-acid sequence, 284 residues long: Probable 3-mercaptopyruvate sulfurtransferase (284 aa).

2 Rhodanese domains span residues Ser17 to Asn138 and Gly168 to Ala281. Position 182 (Arg182) interacts with substrate. Cys241 acts as the Cysteine persulfide intermediate in catalysis. Residues Cys241–Ala247 are substrate specificity.

The protein localises to the cytoplasm. It carries out the reaction 2-oxo-3-sulfanylpropanoate + [thioredoxin]-dithiol = [thioredoxin]-disulfide + hydrogen sulfide + pyruvate + H(+). Functionally, catalyzes the transfer of sulfur from 3-mercaptopyruvate to a thiol-containing acceptor to form an intramolecular disulfide releasing hydrogen sulfide and pyruvate. The sequence is that of Probable 3-mercaptopyruvate sulfurtransferase (sseA) from Pseudomonas aeruginosa (strain ATCC 15692 / DSM 22644 / CIP 104116 / JCM 14847 / LMG 12228 / 1C / PRS 101 / PAO1).